The sequence spans 499 residues: Alpha-L-arabinofuranosidase B (499 aa).

The signal sequence occupies residues 1 to 17 (MFSRRNLLALGLAATVS). A catalytic region spans residues 18 to 335 (AGPCDIYEAG…ENIVAAKYVV (318 aa)). Intrachain disulfides connect cysteine 21/cysteine 31, cysteine 81/cysteine 86, and cysteine 176/cysteine 177. Asparagine 83 carries N-linked (GlcNAc...) asparagine glycosylation. An N-linked (GlcNAc...) asparagine glycan is attached at asparagine 202. Aspartate 219 is a substrate binding site. Residue glutamate 221 is the Nucleophile of the active site. Positions 222, 223, and 296 each coordinate substrate. Aspartate 297 serves as the catalytic Proton donor. Residues 336–499 (GSLVSGPSFT…SFEIETAFAS (164 aa)) are ABD. A disulfide bridge connects residues cysteine 401 and cysteine 439. Residues histidine 416, asparagine 418, phenylalanine 419, aspartate 435, histidine 463, glutamate 465, leucine 468, and aspartate 488 each contribute to the substrate site.

It belongs to the glycosyl hydrolase 54 family.

Its subcellular location is the secreted. It catalyses the reaction Hydrolysis of terminal non-reducing alpha-L-arabinofuranoside residues in alpha-L-arabinosides.. Its pathway is glycan metabolism; L-arabinan degradation. Functionally, alpha-L-arabinofuranosidase involved in the degradation of arabinoxylan, a major component of plant hemicellulose. Able to hydrolyze 1,5-, 1,3- and 1,2-alpha-linkages not only in L-arabinofuranosyl oligosaccharides, but also in polysaccharides containing terminal non-reducing L-arabinofuranoses in side chains, like L-arabinan, arabinogalactan and arabinoxylan. The polypeptide is Alpha-L-arabinofuranosidase B (abfB) (Aspergillus kawachii (strain NBRC 4308) (White koji mold)).